Here is a 440-residue protein sequence, read N- to C-terminus: Exodeoxyribonuclease 7 large subunit (440 aa).

It belongs to the XseA family. As to quaternary structure, heterooligomer composed of large and small subunits.

It is found in the cytoplasm. The catalysed reaction is Exonucleolytic cleavage in either 5'- to 3'- or 3'- to 5'-direction to yield nucleoside 5'-phosphates.. Its function is as follows. Bidirectionally degrades single-stranded DNA into large acid-insoluble oligonucleotides, which are then degraded further into small acid-soluble oligonucleotides. The chain is Exodeoxyribonuclease 7 large subunit from Ralstonia nicotianae (strain ATCC BAA-1114 / GMI1000) (Ralstonia solanacearum).